The following is a 152-amino-acid chain: Deoxyuridine 5'-triphosphate nucleotidohydrolase (152 aa).

Residues 71–73, asparagine 84, and 88–90 contribute to the substrate site; these read RSG and LID.

It belongs to the dUTPase family. It depends on Mg(2+) as a cofactor.

The catalysed reaction is dUTP + H2O = dUMP + diphosphate + H(+). Its pathway is pyrimidine metabolism; dUMP biosynthesis; dUMP from dCTP (dUTP route): step 2/2. This enzyme is involved in nucleotide metabolism: it produces dUMP, the immediate precursor of thymidine nucleotides and it decreases the intracellular concentration of dUTP so that uracil cannot be incorporated into DNA. The sequence is that of Deoxyuridine 5'-triphosphate nucleotidohydrolase from Xanthomonas campestris pv. campestris (strain 8004).